A 331-amino-acid polypeptide reads, in one-letter code: Ketol-acid reductoisomerase (NADP(+)) (331 aa).

Positions 1–181 constitute a KARI N-terminal Rossmann domain; that stretch reads MKMYYDADAD…GGTRAGVIET (181 aa). Residues 24–27, arginine 47, serine 50, and 82–85 contribute to the NADP(+) site; these read YGSQ and DEKQ. Residue histidine 107 is part of the active site. Glycine 133 serves as a coordination point for NADP(+). The KARI C-terminal knotted domain occupies 182–327; the sequence is TFREETETDL…KKLRAMMPWL (146 aa). Mg(2+) is bound by residues aspartate 190, glutamate 194, glutamate 226, and glutamate 230. Residue serine 251 participates in substrate binding.

The protein belongs to the ketol-acid reductoisomerase family. It depends on Mg(2+) as a cofactor.

The catalysed reaction is (2R)-2,3-dihydroxy-3-methylbutanoate + NADP(+) = (2S)-2-acetolactate + NADPH + H(+). It catalyses the reaction (2R,3R)-2,3-dihydroxy-3-methylpentanoate + NADP(+) = (S)-2-ethyl-2-hydroxy-3-oxobutanoate + NADPH + H(+). It participates in amino-acid biosynthesis; L-isoleucine biosynthesis; L-isoleucine from 2-oxobutanoate: step 2/4. It functions in the pathway amino-acid biosynthesis; L-valine biosynthesis; L-valine from pyruvate: step 2/4. Involved in the biosynthesis of branched-chain amino acids (BCAA). Catalyzes an alkyl-migration followed by a ketol-acid reduction of (S)-2-acetolactate (S2AL) to yield (R)-2,3-dihydroxy-isovalerate. In the isomerase reaction, S2AL is rearranged via a Mg-dependent methyl migration to produce 3-hydroxy-3-methyl-2-ketobutyrate (HMKB). In the reductase reaction, this 2-ketoacid undergoes a metal-dependent reduction by NADPH to yield (R)-2,3-dihydroxy-isovalerate. This chain is Ketol-acid reductoisomerase (NADP(+)), found in Heliobacterium modesticaldum (strain ATCC 51547 / Ice1).